We begin with the raw amino-acid sequence, 382 residues long: MARDYYGILGVDRNATESEIKKAYRKLARKYHPDVNPGEEAAEKFREASVAHEVLTDPDKRRIVDMGGDPMEQGGGAGAGGFGGGFGGSGGLGDIFDAFFGGGAGGSRGPRSRVQPGSDTLWRTSITLEEAYKGAKKDLTLDTAVLCTKCHGSGSASDKKPVTCGTCNGAGEIQEVQRSFLGNVMTSRPCHTCDGTGEIIPDPCTECAGDGRVRARRDIVANIPAGIQSGMRIRMAGQGEVGAGGGPAGDLYIEVMVRPHAIFTRDGDDLHASIKVPMFDAALGTELDVESLTGEEVKITIPAGTQPNDVITLDGEGMPKLRAEGHGNLMAHVDLFVPTDLDDRTRELLEEIRNHRSDNASVHREGGEESGFFDKLRNKFRK.

Positions 4 to 68 constitute a J domain; the sequence is DYYGILGVDR…DKRRIVDMGG (65 aa). A CR-type zinc finger spans residues 134-216; the sequence is GAKKDLTLDT…CAGDGRVRAR (83 aa). The Zn(2+) site is built by cysteine 147, cysteine 150, cysteine 164, cysteine 167, cysteine 190, cysteine 193, cysteine 204, and cysteine 207. 4 CXXCXGXG motif repeats span residues 147 to 154, 164 to 171, 190 to 197, and 204 to 211; these read CTKCHGSG, CGTCNGAG, CHTCDGTG, and CTECAGDG.

Belongs to the DnaJ family. Homodimer. Requires Zn(2+) as cofactor.

Its subcellular location is the cytoplasm. In terms of biological role, participates actively in the response to hyperosmotic and heat shock by preventing the aggregation of stress-denatured proteins and by disaggregating proteins, also in an autonomous, DnaK-independent fashion. Unfolded proteins bind initially to DnaJ; upon interaction with the DnaJ-bound protein, DnaK hydrolyzes its bound ATP, resulting in the formation of a stable complex. GrpE releases ADP from DnaK; ATP binding to DnaK triggers the release of the substrate protein, thus completing the reaction cycle. Several rounds of ATP-dependent interactions between DnaJ, DnaK and GrpE are required for fully efficient folding. Also involved, together with DnaK and GrpE, in the DNA replication of plasmids through activation of initiation proteins. This Corynebacterium glutamicum (strain ATCC 13032 / DSM 20300 / JCM 1318 / BCRC 11384 / CCUG 27702 / LMG 3730 / NBRC 12168 / NCIMB 10025 / NRRL B-2784 / 534) protein is Chaperone protein DnaJ 1.